A 288-amino-acid polypeptide reads, in one-letter code: uncharacterized protein (288 aa).

This is an uncharacterized protein from Acanthamoeba polyphaga mimivirus (APMV).